The primary structure comprises 570 residues: 2-isopropylmalate synthase (570 aa).

A Pyruvate carboxyltransferase domain is found at 31–305; the sequence is PIWMSTDLRD…DPELDFSHIN (275 aa). Mg(2+)-binding residues include Asp-40, His-244, His-246, and Asn-280. The regulatory domain stretch occupies residues 437-570; sequence SDGAIGYVSH…RRSSAQATVA (134 aa).

This sequence belongs to the alpha-IPM synthase/homocitrate synthase family. LeuA type 2 subfamily. As to quaternary structure, homodimer. It depends on Mg(2+) as a cofactor.

It localises to the cytoplasm. It carries out the reaction 3-methyl-2-oxobutanoate + acetyl-CoA + H2O = (2S)-2-isopropylmalate + CoA + H(+). It functions in the pathway amino-acid biosynthesis; L-leucine biosynthesis; L-leucine from 3-methyl-2-oxobutanoate: step 1/4. Its function is as follows. Catalyzes the condensation of the acetyl group of acetyl-CoA with 3-methyl-2-oxobutanoate (2-ketoisovalerate) to form 3-carboxy-3-hydroxy-4-methylpentanoate (2-isopropylmalate). The protein is 2-isopropylmalate synthase of Ralstonia pickettii (strain 12J).